We begin with the raw amino-acid sequence, 203 residues long: Sarcosine oxidase subunit gamma (203 aa).

This sequence belongs to the SoxG family. Heterotetramer composed of subunits alpha (SoxA), beta (SoxB), gamma (SoxG) and delta (SoxD).

The protein resides in the cytoplasm. The enzyme catalyses sarcosine + (6S)-5,6,7,8-tetrahydrofolate + O2 = (6R)-5,10-methylene-5,6,7,8-tetrahydrofolate + glycine + H2O2. It carries out the reaction sarcosine + O2 + H2O = formaldehyde + glycine + H2O2. Functionally, in the presence of tetrahydrofolate, catalyzes the oxidative demethylation of sarcosine to yield glycine, 5,10-methylenetetrahydrofolate and hydrogen peroxide. In the absence of tetrahydrofolate, catalyzes the oxidative demethylation of sarcosine to yield glycine, formaldehyde and hydrogen peroxide. This is Sarcosine oxidase subunit gamma from Corynebacterium sp. (strain P-1).